Here is a 299-residue protein sequence, read N- to C-terminus: Protein PRY1 (299 aa).

The signal sequence occupies residues 1–19 (MKLSKLSILTSALATSALA). The interval 103 to 157 (TDSTTTLTSSESTSQSLAQATTTSTPAAASTTSTPAATTTTSQAAATSSASSSDS) is disordered. The SCP domain occupies 167–281 (LAEHNKKRAL…AWGDYVICSY (115 aa)).

This sequence belongs to the CRISP family. In terms of processing, O-glycosylated.

The protein resides in the secreted. Its function is as follows. Secreted protein required for efficient export of lipids such as acetylated sterols. Acts in detoxification of hydrophobic compounds. This chain is Protein PRY1, found in Saccharomyces cerevisiae (strain ATCC 204508 / S288c) (Baker's yeast).